The sequence spans 369 residues: Mannose-1-phosphate guanylyltransferase catalytic subunit beta (369 aa).

The substrate-binding domain stretch occupies residues 12–231 (RALILVGGYG…TGFWMDIGQP (220 aa)). Position 120 (D120) interacts with GDP-alpha-D-mannose. D120 is a binding site for Mg(2+). Residue K171 is part of the active site. Residue D227 participates in GDP-alpha-D-mannose binding. D227 serves as a coordination point for Mg(2+). Residues 254–369 (YTGPGVVGNV…ASVPEPQIIM (116 aa)) form a hexapeptide repeat domain region.

This sequence belongs to the transferase hexapeptide repeat family. In terms of assembly, component of the GMPPA-GMPPB mannose-1-phosphate guanylyltransferase complex composed of 4 Gmppa subunits and 8 Gmppb subunits; the complex is organized into three layers, a central layer made up of 2 Gmppa dimers sandwiched between two layers each made up of 2 Gmppb dimers. Gmppb catalytic activity is reduced when part of the complex and binding of GDP-alpha-D-Mannose by Gmppa induces allosteric feedback inhibition of Gmppb. It depends on Mg(2+) as a cofactor.

It catalyses the reaction alpha-D-mannose 1-phosphate + GTP + H(+) = GDP-alpha-D-mannose + diphosphate. It functions in the pathway nucleotide-sugar biosynthesis; GDP-alpha-D-mannose biosynthesis; GDP-alpha-D-mannose from alpha-D-mannose 1-phosphate (GTP route): step 1/1. Enzyme activity is reduced by incorporation into the GMPPA-GMPPB mannose-1-phosphate guanylyltransferase complex. Allosterically inhibited, when part of the GMPPA-GMPPB complex, by GDP-alpha-D-mannose binding to Gmppa. Functionally, catalytic subunit of the GMPPA-GMPPB mannose-1-phosphate guanylyltransferase complex. Catalyzes the formation of GDP-mannose, an essential precursor of glycan moieties of glycoproteins and glycolipids. Can catalyze the reverse reaction in vitro. Together with GMPPA regulates GDP-alpha-D-mannose levels. This chain is Mannose-1-phosphate guanylyltransferase catalytic subunit beta, found in Drosophila melanogaster (Fruit fly).